The following is a 336-amino-acid chain: CST complex subunit STN1 (336 aa).

Residues 49–126 constitute a DNA-binding region (OB); it reads VDILGTVVCV…EVVASIFYKV (78 aa). Winged helix-turn-helix (wHTH) regions lie at residues 162–263 and 264–336; these read QSQE…YVTD and HDKE…YTAF.

Belongs to the CTC1 family. As to quaternary structure, component of the CST complex.

It is found in the nucleus. Its subcellular location is the chromosome. The protein localises to the telomere. Its function is as follows. Component of the CST complex proposed to act as a specialized replication factor promoting DNA replication under conditions of replication stress or natural replication barriers such as the telomere duplex. The CST complex binds single-stranded DNA with high affinity in a sequence-independent manner, while isolated subunits bind DNA with low affinity by themselves. Initially the CST complex has been proposed to protect telomeres from DNA degradation. However, the CST complex has been shown to be involved in several aspects of telomere replication. This is CST complex subunit STN1 from Aquarana catesbeiana (American bullfrog).